A 101-amino-acid chain; its full sequence is Apolipoprotein C-II (101 aa).

An N-terminal signal peptide occupies residues 1–22 (MGTRLLPALFLVLLVLGFEVQG). The O-glycosylated at one site stretch occupies residues 23-38 (TQQPQQDEMPSPTFLT). The segment at 66 to 74 (AVDEKLRDL) is lipid binding. The tract at residues 78–101 (STAAMSTYTGIFTDQVLSVLKGEE) is lipoprotein lipase cofactor.

It belongs to the apolipoprotein C2 family. Post-translationally, proapolipoprotein C-II is synthesized as a sialic acid containing glycoprotein which is subsequently desialylated prior to its proteolytic processing. Proapolipoprotein C-II, the major form found in plasma undergoes proteolytic cleavage of its N-terminal hexapeptide to generate apolipoprotein C-II, which occurs as the minor form in plasma. Liver and intestine.

The protein resides in the secreted. Its function is as follows. Component of chylomicrons, very low-density lipoproteins (VLDL), low-density lipoproteins (LDL), and high-density lipoproteins (HDL) in plasma. Plays an important role in lipoprotein metabolism as an activator of lipoprotein lipase. Both proapolipoprotein C-II and apolipoprotein C-II can activate lipoprotein lipase. In normolipidemic individuals, it is mainly distributed in the HDL, whereas in hypertriglyceridemic individuals, predominantly found in the VLDL and LDL. The protein is Apolipoprotein C-II (APOC2) of Homo sapiens (Human).